Consider the following 274-residue polypeptide: Shikimate dehydrogenase (NADP(+)) (274 aa).

Residues 14 to 16 (SKS) and threonine 61 each bind shikimate. Catalysis depends on lysine 65, which acts as the Proton acceptor. The shikimate site is built by asparagine 86 and aspartate 102. Residues 126–130 (GAGGA), 150–155 (NRTAEK), and methionine 214 contribute to the NADP(+) site. Tyrosine 216 contacts shikimate. Residue glycine 239 participates in NADP(+) binding.

Belongs to the shikimate dehydrogenase family. In terms of assembly, homodimer.

The catalysed reaction is shikimate + NADP(+) = 3-dehydroshikimate + NADPH + H(+). Its pathway is metabolic intermediate biosynthesis; chorismate biosynthesis; chorismate from D-erythrose 4-phosphate and phosphoenolpyruvate: step 4/7. Its function is as follows. Involved in the biosynthesis of the chorismate, which leads to the biosynthesis of aromatic amino acids. Catalyzes the reversible NADPH linked reduction of 3-dehydroshikimate (DHSA) to yield shikimate (SA). The protein is Shikimate dehydrogenase (NADP(+)) of Pseudoalteromonas translucida (strain TAC 125).